The following is a 716-amino-acid chain: Translation initiation factor IF-2 (716 aa).

A disordered region spans residues 52–135 (QQESNNNTKQ…PAAEPKEMPS (84 aa)). The span at 56-125 (NNNTKQNTQN…KNNKGNKNNK (70 aa)) shows a compositional bias: low complexity. Residues 218 to 387 (ERPAVVTIMG…GLVAEVQELK (170 aa)) form the tr-type G domain. The tract at residues 227–234 (GHVDHGKT) is G1. Residue 227–234 (GHVDHGKT) participates in GTP binding. The segment at 252 to 256 (GITQH) is G2. The segment at 273 to 276 (DTPG) is G3. GTP contacts are provided by residues 273-277 (DTPGH) and 327-330 (NKID). The G4 stretch occupies residues 327 to 330 (NKID). The tract at residues 363 to 365 (SAL) is G5.

This sequence belongs to the TRAFAC class translation factor GTPase superfamily. Classic translation factor GTPase family. IF-2 subfamily.

It is found in the cytoplasm. One of the essential components for the initiation of protein synthesis. Protects formylmethionyl-tRNA from spontaneous hydrolysis and promotes its binding to the 30S ribosomal subunits. Also involved in the hydrolysis of GTP during the formation of the 70S ribosomal complex. This chain is Translation initiation factor IF-2, found in Staphylococcus haemolyticus (strain JCSC1435).